A 41-amino-acid polypeptide reads, in one-letter code: Large ribosomal subunit protein bL36 (41 aa).

Belongs to the bacterial ribosomal protein bL36 family.

The protein is Large ribosomal subunit protein bL36 of Caulobacter vibrioides (strain ATCC 19089 / CIP 103742 / CB 15) (Caulobacter crescentus).